Consider the following 220-residue polypeptide: Large ribosomal subunit protein bL21 (220 aa).

A disordered region spans residues 109-158 (SKKVAAKPATSEEKAAEEKPAKAKKEAAEKGASPRETKAAPLFSAPEGEP). A compositionally biased stretch (basic and acidic residues) spans 118–146 (TSEEKAAEEKPAKAKKEAAEKGASPRETK).

It belongs to the bacterial ribosomal protein bL21 family. Part of the 50S ribosomal subunit. Contacts protein L20.

This protein binds to 23S rRNA in the presence of protein L20. This chain is Large ribosomal subunit protein bL21, found in Chelativorans sp. (strain BNC1).